Consider the following 586-residue polypeptide: Madf and zinc finger protein 1 (586 aa).

The segment at 161–194 (FMSEDDLAPPRKPGRPPRRTRPGQVFKFKVSFIR) is involved in interaction with Cp190. Positions 201-292 (HLIQAYKEHP…KCEFLSVAPV (92 aa)) form a DNA-binding region, MADF 1. The involved in interaction with Cp190 stretch occupies residues 294–319 (TPRENEEDNDLTAIKLNFKEENLITT). The segment at residues 320-413 (SFIETYANYP…MCSFLPAKGS (94 aa)) is a DNA-binding region (MADF 2). C2H2-type zinc fingers lie at residues 418-441 (LYCD…VKAH), 448-471 (YLCS…LRSH), 476-498 (LKCQ…TLIH), 504-527 (HVCD…NGVH), 533-555 (YSCN…IKGH), and 561-583 (KKCE…RRSH).

In terms of assembly, interacts (via regions flanking MADF domain 1) with Cp190 (via regions between the BTB domain and first zinc finger domain); the interaction is probably direct and is essential for protein function.

The protein resides in the nucleus. It localises to the chromosome. Its subcellular location is the nucleoplasm. Its function is as follows. Chromatin-binding protein involved in the organization of active promoters and insulators. Essential for the activity of heterochromatin promoters; primarily binds to specific motifs within promoters of housekeeping genes. May also associate to a lesser extent with promoters in euchromatin. Mediates recruitment of Cp190, a multifunctional protein involved in the recruitment of transcription complexes, the creation of open chromatin regions and the activity of insulators. Cooperates with pita and su(Hw) to recruit Cp190 and regulate insulator function at the front-ultraabdominal (Fub) boundary. May cooperate with other C2H2 zinc finger proteins, such as M1BP, to recruit CP190 to promoters. May be involved in cellular organization and development of the eye. The sequence is that of Madf and zinc finger protein 1 from Drosophila melanogaster (Fruit fly).